The chain runs to 343 residues: Ribosomal RNA small subunit methyltransferase C (343 aa).

This sequence belongs to the methyltransferase superfamily. RsmC family. As to quaternary structure, monomer.

The protein resides in the cytoplasm. The catalysed reaction is guanosine(1207) in 16S rRNA + S-adenosyl-L-methionine = N(2)-methylguanosine(1207) in 16S rRNA + S-adenosyl-L-homocysteine + H(+). Its function is as follows. Specifically methylates the guanine in position 1207 of 16S rRNA in the 30S particle. The sequence is that of Ribosomal RNA small subunit methyltransferase C from Escherichia coli O157:H7.